The primary structure comprises 301 residues: Beta-1,3-galactosyltransferase 5 (301 aa).

Over 1-7 (MAFPKMR) the chain is Cytoplasmic. The chain crosses the membrane as a helical; Signal-anchor for type II membrane protein span at residues 8–28 (LMYVCLLVLGALCLYFSMYSL). Topologically, residues 29–301 (NLFKEQSFVY…LLDYWQALEN (273 aa)) are lumenal. Residues Asn130, Asn174, and Asn231 are each glycosylated (N-linked (GlcNAc...) asparagine).

Belongs to the glycosyltransferase 31 family.

The protein resides in the golgi apparatus membrane. It carries out the reaction a globoside Gb4Cer (d18:1(4E)) + UDP-alpha-D-galactose = a globoside GalGb4Cer (d18:1(4E)) + UDP + H(+). It participates in protein modification; protein glycosylation. Functionally, catalyzes the transfer of Gal to GlcNAc-based acceptors with a preference for the core3 O-linked glycan GlcNAc(beta1,3)GalNAc structure. Can use glycolipid LC3Cer as an efficient acceptor. The polypeptide is Beta-1,3-galactosyltransferase 5 (B3GALT5) (Pan paniscus (Pygmy chimpanzee)).